The following is a 416-amino-acid chain: Probable glucan 1,3-beta-glucosidase A (416 aa).

The N-terminal stretch at 1–21 (MLYNLSKAVLALSVLAASADA) is a signal peptide. The active-site Proton donor is the Glu209. 2 disulfides stabilise this stretch: Cys290-Cys415 and Cys316-Cys341. Glu308 serves as the catalytic Nucleophile.

It belongs to the glycosyl hydrolase 5 (cellulase A) family. In terms of assembly, monomer. It depends on Mn(2+) as a cofactor.

The protein resides in the secreted. It catalyses the reaction Successive hydrolysis of beta-D-glucose units from the non-reducing ends of (1-&gt;3)-beta-D-glucans, releasing alpha-glucose.. Its function is as follows. Beta-glucanases participate in the metabolism of beta-glucan, the main structural component of the cell wall. It could also function biosynthetically as a transglycosylase. The polypeptide is Probable glucan 1,3-beta-glucosidase A (exgA) (Aspergillus terreus (strain NIH 2624 / FGSC A1156)).